We begin with the raw amino-acid sequence, 93 residues long: UPF0390 protein C24B10.18 (93 aa).

The interval 1–32 (MAQGEFKKKKNSSANKGGRVTKHSKNPKKGAR) is disordered. Positions 19–31 (RVTKHSKNPKKGA) are enriched in basic residues.

This sequence belongs to the UPF0390 family.

This chain is UPF0390 protein C24B10.18, found in Schizosaccharomyces pombe (strain 972 / ATCC 24843) (Fission yeast).